Reading from the N-terminus, the 99-residue chain is MNPENYLYLSALLFTIGAAGVLIRRNAIIVFMCIELMLNASNLAFVTFARMHGNLDGQVFAFFTMVVAAAEVVVGLAIIMTIFRSRRSASVDDANLLKN.

The next 3 helical transmembrane spans lie at 3-23, 28-48, and 59-79; these read PENYLYLSALLFTIGAAGVLI, IIVFMCIELMLNASNLAFVTF, and VFAFFTMVVAAAEVVVGLAII.

The protein belongs to the complex I subunit 4L family. In terms of assembly, NDH-1 is composed of 14 different subunits. Subunits NuoA, H, J, K, L, M, N constitute the membrane sector of the complex.

It localises to the cell membrane. It carries out the reaction a quinone + NADH + 5 H(+)(in) = a quinol + NAD(+) + 4 H(+)(out). Functionally, NDH-1 shuttles electrons from NADH, via FMN and iron-sulfur (Fe-S) centers, to quinones in the respiratory chain. The immediate electron acceptor for the enzyme in this species is believed to be a menaquinone. Couples the redox reaction to proton translocation (for every two electrons transferred, four hydrogen ions are translocated across the cytoplasmic membrane), and thus conserves the redox energy in a proton gradient. This is NADH-quinone oxidoreductase subunit K from Rhodococcus jostii (strain RHA1).